The following is a 134-amino-acid chain: D-ribose pyranase (134 aa).

H20 serves as the catalytic Proton donor. Residues D28, H99, and 123 to 125 (FSN) contribute to the substrate site.

This sequence belongs to the RbsD / FucU family. RbsD subfamily. Homodecamer.

The protein localises to the cytoplasm. It carries out the reaction beta-D-ribopyranose = beta-D-ribofuranose. The protein operates within carbohydrate metabolism; D-ribose degradation; D-ribose 5-phosphate from beta-D-ribopyranose: step 1/2. Functionally, catalyzes the interconversion of beta-pyran and beta-furan forms of D-ribose. In Staphylococcus epidermidis (strain ATCC 12228 / FDA PCI 1200), this protein is D-ribose pyranase.